The following is a 382-amino-acid chain: Sphingosine 1-phosphate receptor 1 (382 aa).

N-acetylvaline is present on Val-2. The Extracellular portion of the chain corresponds to 2–46; it reads VSTSIPEVKALRSSVSDYGNYDIIVRHYNYTGKLNIGAEKDHGIK. The residue at position 10 (Lys-10) is an N6-acetyllysine. Asn-30 carries an N-linked (GlcNAc...) asparagine glycan. The chain crosses the membrane as a helical span at residues 47–68; the sequence is LTSVVFILICCFIILENIFVLL. The Cytoplasmic segment spans residues 69 to 82; the sequence is TIWKTKKFHRPMYY. A helical membrane pass occupies residues 83–104; it reads FIGNLALSDLLAGVAYTANLLL. Topologically, residues 105–116 are extracellular; sequence SGATTYKLTPAQ. Residues 117–138 traverse the membrane as a helical segment; it reads WFLREGSMFVALSASVFSLLAI. Sphing-4-enine 1-phosphate is bound at residue 120 to 121; the sequence is RE. Topologically, residues 139 to 160 are cytoplasmic; that stretch reads AIERYITMLKMKLHNGSNSSRS. The helical transmembrane segment at 161 to 182 threads the bilayer; the sequence is FLLISACWVISLILGGLPIMGW. The Extracellular portion of the chain corresponds to 183–196; sequence NCISSLSSCSTVLP. The cysteines at positions 184 and 191 are disulfide-linked. A helical membrane pass occupies residues 197–224; sequence LYHKHYILFCTTVFTLLLLSIVILYCRI. The Cytoplasmic segment spans residues 225–257; the sequence is YSLVRTRSRRLTFRKNISKASRSSEKSLALLKT. Thr-236 bears the Phosphothreonine mark. A helical transmembrane segment spans residues 258-278; it reads VIIVLSVFIACWAPLFILLLL. 265–269 contacts sphing-4-enine 1-phosphate; that stretch reads FIACW. The Extracellular portion of the chain corresponds to 279–289; it reads DVGCKAKTCDI. A disulfide bond links Cys-282 and Cys-287. The helical transmembrane segment at 290–310 threads the bilayer; it reads LYKAEYFLVLAVLNSGTNPII. Residues 311–382 are Cytoplasmic-facing; sequence YTLTNKEMRR…MSSGNVNSSS (72 aa). Residue Cys-328 is the site of S-palmitoyl cysteine attachment. Residues 348–382 form a disordered region; that stretch reads MEFSRSKSDNSSHPQKDDGDNPETIMSSGNVNSSS. Phosphoserine is present on residues Ser-351 and Ser-353. The span at 351-366 shows a compositional bias: basic and acidic residues; sequence SRSKSDNSSHPQKDDG. The span at 371–382 shows a compositional bias: polar residues; that stretch reads TIMSSGNVNSSS.

The protein belongs to the G-protein coupled receptor 1 family. As to quaternary structure, interacts with GNAI1 and GNAI3. Interacts with CD69; this interaction promotes S1PR1 degradation. Palmitoylated by ZDHHC5. Palmitoylation is required for targeting to plasma membrane, enabling G(i) coupling. Expressed in a wide variety of tissues with highest levels in brain, heart and spleen. Lower levels found in kidney, liver, lung, muscle, placenta, thymus, and uterus. Very low levels in intestine, stomach and testis. According to PubMed:9931453, expressed modestly in apparent endothelial cells surrounding some blood vessels (e.g. aortic trunk).

Its subcellular location is the cell membrane. The protein localises to the endosome. It is found in the membrane raft. In terms of biological role, G-protein coupled receptor for the bioactive lysosphingolipid sphingosine 1-phosphate (S1P) that seems to be coupled to the G(i) subclass of heteromeric G proteins. Signaling leads to the activation of RAC1, SRC, PTK2/FAK1 and MAP kinases. Plays an important role in cell migration, probably via its role in the reorganization of the actin cytoskeleton and the formation of lamellipodia in response to stimuli that increase the activity of the sphingosine kinase SPHK1. Required for normal chemotaxis toward sphingosine 1-phosphate. Required for normal embryonic heart development and normal cardiac morphogenesis. Plays an important role in the regulation of sprouting angiogenesis and vascular maturation. Inhibits sprouting angiogenesis to prevent excessive sprouting during blood vessel development. Required for normal egress of mature T-cells from the thymus into the blood stream and into peripheral lymphoid organs. Plays a role in the migration of osteoclast precursor cells, the regulation of bone mineralization and bone homeostasis. Plays a role in responses to oxidized 1-palmitoyl-2-arachidonoyl-sn-glycero-3-phosphocholine by pulmonary endothelial cells and in the protection against ventilator-induced lung injury. This chain is Sphingosine 1-phosphate receptor 1, found in Mus musculus (Mouse).